A 183-amino-acid polypeptide reads, in one-letter code: Probable chemoreceptor glutamine deamidase CheD (183 aa).

Belongs to the CheD family.

It carries out the reaction L-glutaminyl-[protein] + H2O = L-glutamyl-[protein] + NH4(+). Functionally, probably deamidates glutamine residues to glutamate on methyl-accepting chemotaxis receptors (MCPs), playing an important role in chemotaxis. This is Probable chemoreceptor glutamine deamidase CheD from Zymomonas mobilis subsp. mobilis (strain ATCC 31821 / ZM4 / CP4).